The sequence spans 285 residues: Inositol oxygenase (285 aa).

Position 29 (Arg-29) interacts with substrate. Ser-33 is subject to Phosphoserine. 85–87 (DES) contributes to the substrate binding site. Fe cation contacts are provided by His-98, His-123, and Asp-124. Residues Lys-127 and 141 to 142 (GD) each bind substrate. Residues His-194, His-220, and Asp-253 each coordinate Fe cation. 220–221 (HS) lines the substrate pocket.

This sequence belongs to the myo-inositol oxygenase family. Requires Fe cation as cofactor. As to expression, kidney specific.

It is found in the cytoplasm. It catalyses the reaction myo-inositol + O2 = D-glucuronate + H2O + H(+). The protein operates within polyol metabolism; myo-inositol degradation into D-glucuronate; D-glucuronate from myo-inositol: step 1/1. The chain is Inositol oxygenase (Miox) from Rattus norvegicus (Rat).